Reading from the N-terminus, the 111-residue chain is Microtubule nucleation factor SSNA1 (111 aa).

Residues 6 to 71 (QALQNHNNEL…ARKTETKNEY (66 aa)) are a coiled coil.

The protein belongs to the SSNA1 family. As to quaternary structure, self-assembles into fibrils in a head-to-tail fashion.

The protein resides in the cytoplasm. It localises to the cytoskeleton. Its subcellular location is the flagellum basal body. The protein localises to the flagellum axoneme. Functionally, microtubule-binding protein which stabilizes dynamic microtubules by slowing growth and shrinkage at both plus and minus ends and serves as a sensor of microtubule damage. Induces microtubule branching which is mediated by the formation of long SSNA1 fibrils which guide microtubule protofilaments to split apart from the mother microtubule and form daughter microtubules. Required for cell division. The protein is Microtubule nucleation factor SSNA1 of Chlamydomonas reinhardtii (Chlamydomonas smithii).